A 154-amino-acid chain; its full sequence is Prefoldin subunit 2 (154 aa).

Disordered stretches follow at residues 1 to 20 and 126 to 154; these read MADS…GKGA and LMGE…VLVS. The span at 9–18 shows a compositional bias: gly residues; the sequence is GKSGGSGAGK. The segment covering 126–139 has biased composition (basic and acidic residues); sequence LMGEDEKPAAKENS. Residues 140–154 are compositionally biased toward low complexity; that stretch reads EGAGAKASSAGVLVS.

It belongs to the prefoldin subunit beta family. Heterohexamer of two PFD-alpha type and four PFD-beta type subunits. Component of the PAQosome complex which is responsible for the biogenesis of several protein complexes and which consists of R2TP complex members RUVBL1, RUVBL2, RPAP3 and PIH1D1, URI complex members PFDN2, PFDN6, PDRG1, UXT and URI1 as well as ASDURF, POLR2E and DNAAF10/WDR92. Interacts with URI1; the interaction is phosphorylation-dependent and occurs in a growth-dependent manner.

The protein localises to the nucleus. The protein resides in the cytoplasm. It localises to the mitochondrion. Its function is as follows. Binds specifically to cytosolic chaperonin (c-CPN) and transfers target proteins to it. Binds to nascent polypeptide chain and promotes folding in an environment in which there are many competing pathways for nonnative proteins. This is Prefoldin subunit 2 (Pfdn2) from Mus musculus (Mouse).